Here is a 232-residue protein sequence, read N- to C-terminus: tRNA-uridine aminocarboxypropyltransferase (232 aa).

Zn(2+) is bound by residues cysteine 31, cysteine 34, cysteine 41, and cysteine 43. The DXTW motif lies at 137-140 (DGTW).

It belongs to the TDD superfamily. DTWD2 family. TapT subfamily. In terms of assembly, monomer in solution.

The enzyme catalyses a uridine in tRNA + S-adenosyl-L-methionine = a 3-[(3S)-3-amino-3-carboxypropyl]uridine in tRNA + S-methyl-5'-thioadenosine + H(+). It carries out the reaction uridine(47) in tRNA(Phe) + S-adenosyl-L-methionine = 3-[(3S)-3-amino-3-carboxypropyl]uridine(47) in tRNA(Phe) + S-methyl-5'-thioadenosine + H(+). The degree of the acp3U modification at U47 is dependent on the presence of the m7G modification at the preceding nucleotide G46. It also depends on medium conditions. In terms of biological role, catalyzes the formation of 3-(3-amino-3-carboxypropyl)uridine (acp3U) at position 47 of tRNAs. Acp3U47 confers thermal stability on tRNA. The polypeptide is tRNA-uridine aminocarboxypropyltransferase (Escherichia coli (strain K12)).